Consider the following 946-residue polypeptide: Protein dct-6 (946 aa).

A coiled-coil region spans residues 326 to 363; the sequence is YMDMNDQIEQMIALLVDQLEELEKLEQLCDEVQKTGNQ.

Functionally, may have a role in tumor suppression. In Caenorhabditis briggsae, this protein is Protein dct-6.